A 292-amino-acid polypeptide reads, in one-letter code: MSGMEATVTIPIWQNKPHGAARSVVRRIGTNLPLKPCARASFETLPNISDLCLRDVPPVPTLADIAWIAADEEETYARVRSDTRPLRHTWKPSPLIVMQRNASVPNLRGSEERLLALKKPALPALSRTTELQDELSHLRSQIAKIVAADAASASLTPDFLSPGSSNVSSPLPCFGSSFHSTTSFVISDITEETEVEVPELPSVPLLCSASPECCKPEHKAACSSSEEDDCVSLSKASSFADMMGILKDFHRMKQSQDLNRSLLKEEDPAVLISEVLRRKFALKEEDISRKGN.

Threonine 30 is subject to Phosphothreonine. Serine 41 carries the post-translational modification Phosphoserine. At serine 103 the chain carries Phosphoserine; by AMPK. Phosphoserine is present on residues serine 110, serine 224, and serine 225. Serine 238 is subject to Phosphoserine; by AMPK. Serine 261 and serine 273 each carry phosphoserine.

Belongs to the MTFR1 family. In terms of processing, phosphorylated by AMPK. Upon stress, phosphorylation at Ser-103 and Ser-238 by AMPK is sufficient to induce mitochondrial fragmentation.

It localises to the mitochondrion outer membrane. In terms of biological role, mitochondrial protein required for adaptation of miochondrial dynamics to metabolic changes. Regulates mitochondrial morphology at steady state and mediates AMPK-dependent stress-induced mitochondrial fragmentation via the control of OPA1 levels. The polypeptide is Mitochondrial fission regulator 1-like (Homo sapiens (Human)).